We begin with the raw amino-acid sequence, 394 residues long: 4-hydroxyphenylpyruvate dioxygenase (394 aa).

VOC domains lie at 27–161 and 193–351; these read GYDH…LIER and HIDH…LFTK. 3 residues coordinate Fe cation: H196, H279, and E362.

Belongs to the 4HPPD family. Fe cation is required as a cofactor.

The catalysed reaction is 3-(4-hydroxyphenyl)pyruvate + O2 = homogentisate + CO2. It participates in amino-acid degradation; L-phenylalanine degradation; acetoacetate and fumarate from L-phenylalanine: step 3/6. This chain is 4-hydroxyphenylpyruvate dioxygenase, found in Yarrowia lipolytica (strain CLIB 122 / E 150) (Yeast).